The primary structure comprises 781 residues: MTSYRPEFSASEQSQIDAEFSRLASNKSVYLDHAGTTLYAESQVTAAAEQLQRNVICNPHTCRLTGDFVDQVRFKILEFFNTTAEDYHVIFTANATAALSLVAENFDFGSSGEFHFCQENHTSVLGMRERVRENGIYMLRENEISGGKHKANGKVHEVSGKTGNSLLTFSAQCNFSGYKIPLEVIEQIQIDGLAKPGKELWSSLGEKKKNMHNDYYICLDAASFVATSPLDLQKYRPDYVCLSFYKIFGYPTGVGALLVSRRGAEVFQKRRFFGGGTINYAYPHAMDYQLRETFHQRYEDGTLPFLSIVGLLEGFRTLERLVPRTDEFSTMERISRHVFGLAKYLEDQLRQLHHPNGEPLVKLYNKVGYQDKSRQGGIVAFNVRTESGSFVGFGEIACVAALHGILLRTGCFCNIGACQYYLGLDEDALDAIYKRAGRICGDYFDLIDGQPTGAVRVSFGYMTTIQDVDKLLQMLRSSYLATKPLQRIQFIEEQAEQLPPLLKERVQLLRPKLLQMAIYPVKSCAAFKIELPGSWPLTDQGLKYDREWMIVDMNGMALTQKRCTELCLIRPVIKVDQLELQFGENSTISVPLSLDDQAADTAKCVSKVCRQPVEGLDCGDRVAQWLSENLGMEGLRLLRQSGQRNSSKDQQKLSLVNQAQFLLLNKSSVRSLQFEEPLDETVDRFRANIIIDTGSAFEELTYKALSIGGIQFQVEGPCQRCDMICINQRTGERSPETLTTISRLQKGRMRFGIYITRIPQDTKELEPKEQHMTCGDVVLVE.

Residue K246 is modified to N6-(pyridoxal phosphate)lysine. C413 is a catalytic residue. In terms of domain architecture, MOSC spans 635–781; sequence LRLLRQSGQR…MTCGDVVLVE (147 aa). At S734 the chain carries Phosphoserine.

Belongs to the class-V pyridoxal-phosphate-dependent aminotransferase family. MOCOS subfamily. The cofactor is pyridoxal 5'-phosphate.

It carries out the reaction Mo-molybdopterin + L-cysteine + AH2 = thio-Mo-molybdopterin + L-alanine + A + H2O. The protein operates within cofactor biosynthesis; molybdopterin biosynthesis. Functionally, sulfurates the molybdenum cofactor. Sulfation of molybdenum is essential for xanthine dehydrogenase (XDH) and aldehyde oxidase (ADO) enzymes in which molybdenum cofactor is liganded by 1 oxygen and 1 sulfur atom in active form. The polypeptide is Molybdenum cofactor sulfurase (Drosophila melanogaster (Fruit fly)).